The primary structure comprises 210 residues: Outer-membrane lipoprotein LolB (210 aa).

An N-terminal signal peptide occupies residues methionine 1 to glycine 18. Cysteine 19 carries N-palmitoyl cysteine lipidation. Cysteine 19 carries S-diacylglycerol cysteine lipidation.

This sequence belongs to the LolB family. In terms of assembly, monomer.

The protein resides in the cell outer membrane. Plays a critical role in the incorporation of lipoproteins in the outer membrane after they are released by the LolA protein. This Glaesserella parasuis serovar 5 (strain SH0165) (Haemophilus parasuis) protein is Outer-membrane lipoprotein LolB.